We begin with the raw amino-acid sequence, 196 residues long: Ribonuclease HII (196 aa).

The RNase H type-2 domain occupies 4 to 196 (IWVCGVDEAG…PVRRVLEGSF (193 aa)). A divalent metal cation contacts are provided by Asp-10, Glu-11, and Asp-106.

The protein belongs to the RNase HII family. The cofactor is Mn(2+). Mg(2+) serves as cofactor.

The protein localises to the cytoplasm. It catalyses the reaction Endonucleolytic cleavage to 5'-phosphomonoester.. Endonuclease that specifically degrades the RNA of RNA-DNA hybrids. This chain is Ribonuclease HII, found in Polynucleobacter asymbioticus (strain DSM 18221 / CIP 109841 / QLW-P1DMWA-1) (Polynucleobacter necessarius subsp. asymbioticus).